The chain runs to 449 residues: Exodeoxyribonuclease 7 large subunit (449 aa).

It belongs to the XseA family. In terms of assembly, heterooligomer composed of large and small subunits.

Its subcellular location is the cytoplasm. The catalysed reaction is Exonucleolytic cleavage in either 5'- to 3'- or 3'- to 5'-direction to yield nucleoside 5'-phosphates.. In terms of biological role, bidirectionally degrades single-stranded DNA into large acid-insoluble oligonucleotides, which are then degraded further into small acid-soluble oligonucleotides. In Salmonella typhimurium (strain LT2 / SGSC1412 / ATCC 700720), this protein is Exodeoxyribonuclease 7 large subunit.